Consider the following 264-residue polypeptide: Thymidylate synthase (264 aa).

Arg21 lines the dUMP pocket. His51 serves as a coordination point for (6R)-5,10-methylene-5,6,7,8-tetrahydrofolate. A dUMP-binding site is contributed by 126 to 127 (RR). The Nucleophile role is filled by Cys146. Residues 166–169 (RSAD), Asn177, and 207–209 (HIY) contribute to the dUMP site. Asp169 is a binding site for (6R)-5,10-methylene-5,6,7,8-tetrahydrofolate. Ser263 provides a ligand contact to (6R)-5,10-methylene-5,6,7,8-tetrahydrofolate.

Belongs to the thymidylate synthase family. Bacterial-type ThyA subfamily. In terms of assembly, homodimer.

It localises to the cytoplasm. The catalysed reaction is dUMP + (6R)-5,10-methylene-5,6,7,8-tetrahydrofolate = 7,8-dihydrofolate + dTMP. Its pathway is pyrimidine metabolism; dTTP biosynthesis. Functionally, catalyzes the reductive methylation of 2'-deoxyuridine-5'-monophosphate (dUMP) to 2'-deoxythymidine-5'-monophosphate (dTMP) while utilizing 5,10-methylenetetrahydrofolate (mTHF) as the methyl donor and reductant in the reaction, yielding dihydrofolate (DHF) as a by-product. This enzymatic reaction provides an intracellular de novo source of dTMP, an essential precursor for DNA biosynthesis. The polypeptide is Thymidylate synthase (Phocaeicola vulgatus (strain ATCC 8482 / DSM 1447 / JCM 5826 / CCUG 4940 / NBRC 14291 / NCTC 11154) (Bacteroides vulgatus)).